The sequence spans 454 residues: Sensor histidine kinase YkoH (454 aa).

Residues 1-12 are Cytoplasmic-facing; sequence MKLKTKIHLYTS. The chain crosses the membrane as a helical span at residues 13–33; it reads ISLLILLILVHTAVYLIFSSA. Topologically, residues 34 to 153 are extracellular; the sequence is LTSKDAARLA…NTEESLFLLK (120 aa). Residues 154–174 traverse the membrane as a helical segment; sequence IILIAASAAVCIASFFAGSLL. At 175–454 the chain is on the cytoplasmic side; sequence ARRIINPIRR…QFSEQNGGGR (280 aa). Residues 176–230 form the HAMP domain; that stretch reads RRIINPIRRLMITMKDIQRDKEFKTISLEGQSNDELYQMGLTFNEMAMMLKEHYD. In terms of domain architecture, Histidine kinase spans 238-450; sequence DASHELKTPL…AVTMQFSEQN (213 aa). Histidine 241 bears the Phosphohistidine; by autocatalysis mark.

It localises to the cell membrane. The catalysed reaction is ATP + protein L-histidine = ADP + protein N-phospho-L-histidine.. Probable member of the two-component regulatory system YkoH/YkoG. Potentially phosphorylates YkoG. This Bacillus subtilis (strain 168) protein is Sensor histidine kinase YkoH (ykoH).